The following is a 168-amino-acid chain: Glycine-rich RNA-binding protein 2 (168 aa).

The RRM domain occupies 8 to 86 (YRCFVGGLAW…RNITVNQAQS (79 aa)). Residues 148–168 (GYGGGGGYGGNRGDSGGNWRN) are disordered.

Possibly has a role in RNA transcription or processing during stress. In Sorghum bicolor (Sorghum), this protein is Glycine-rich RNA-binding protein 2 (GRP2).